We begin with the raw amino-acid sequence, 653 residues long: 1-deoxy-D-xylulose-5-phosphate synthase (653 aa).

Thiamine diphosphate contacts are provided by residues H86 and 127 to 129 (GHS). D158 is a Mg(2+) binding site. Thiamine diphosphate-binding positions include 159–160 (GA), N187, and F294. Mg(2+) is bound at residue N187. Positions 309–324 (KLEKTTSEPPPKKEPR) are enriched in basic and acidic residues. Positions 309-343 (KLEKTTSEPPPKKEPRSPNAATAEPEAQPKPQPKP) are disordered. E395 is a thiamine diphosphate binding site.

Belongs to the transketolase family. DXPS subfamily. Homodimer. It depends on Mg(2+) as a cofactor. The cofactor is thiamine diphosphate.

The catalysed reaction is D-glyceraldehyde 3-phosphate + pyruvate + H(+) = 1-deoxy-D-xylulose 5-phosphate + CO2. Its pathway is metabolic intermediate biosynthesis; 1-deoxy-D-xylulose 5-phosphate biosynthesis; 1-deoxy-D-xylulose 5-phosphate from D-glyceraldehyde 3-phosphate and pyruvate: step 1/1. Catalyzes the acyloin condensation reaction between C atoms 2 and 3 of pyruvate and glyceraldehyde 3-phosphate to yield 1-deoxy-D-xylulose-5-phosphate (DXP). This chain is 1-deoxy-D-xylulose-5-phosphate synthase, found in Chromohalobacter salexigens (strain ATCC BAA-138 / DSM 3043 / CIP 106854 / NCIMB 13768 / 1H11).